Reading from the N-terminus, the 413-residue chain is MTAPTGTSATTTRPWTPRIATQLSVLACAAFIYVTAEILPVGALSAIARNLRVSVVLVGTLLSWYALVAAVTTVPLVRWTAHWPRRRALVVSLVCLTVSQLVSALAPNFAVLAAGRVLCAVTHGLLWAVIAPIATRLVPPSHAGRATTSIYIGTSLALVVGSPLTAAMSLMWGWRLAAVCVTGAAAAVALAARLALPEMVLRADQLEHVGRRARHPRNPRLVKVSVLTMIAVTGHFVSYTYIVVIIRDVVGVRGPNLAWLLAAYGVAGLVSVPLVARPLDRWPKGAVIVGMTGLTAAFTLLTALAFGERHTAATALLGTGAIVLWGALATAVSPMLQSAAMRSGGDDPDGASGLYVTAFQIGIMAGALLGGLLYERSLAMMLTASAGLMGVALFGMTVSQHLFENPTLSPGDG.

12 consecutive transmembrane segments (helical) span residues 23–43 (LSVL…PVGA), 55–75 (VVLV…TTVP), 89–109 (LVVS…APNF), 110–130 (AVLA…WAVI), 150–170 (IYIG…AMSL), 176–196 (LAAV…RLAL), 226–246 (VLTM…VVII), 256–276 (NLAW…PLVA), 286–306 (AVIV…ALAF), 312–332 (AATA…ATAV), 353–373 (GLYV…GGLL), and 378–398 (LAMM…GMTV).

This sequence belongs to the major facilitator superfamily.

Its subcellular location is the cell membrane. Functionally, active efflux pump that plays an important role in chloramphenicol resistance. In Mycobacterium tuberculosis (strain CDC 1551 / Oshkosh), this protein is Chloramphenicol efflux pump MT0201.